Consider the following 73-residue polypeptide: Small ribosomal subunit protein uS15c (73 aa).

Belongs to the universal ribosomal protein uS15 family. Part of the 30S ribosomal subunit.

It is found in the plastid. The protein localises to the chloroplast. The chain is Small ribosomal subunit protein uS15c (rps15) from Welwitschia mirabilis (Tree tumbo).